Consider the following 291-residue polypeptide: Undecaprenyl-diphosphatase 2 (291 aa).

The next 6 membrane-spanning stretches (helical) occupy residues proline 39–phenylalanine 59, alanine 85–leucine 105, isoleucine 118–alanine 138, phenylalanine 203–alanine 223, proline 231–methionine 251, and phenylalanine 262–leucine 282.

It belongs to the UppP family.

It is found in the cell membrane. It catalyses the reaction di-trans,octa-cis-undecaprenyl diphosphate + H2O = di-trans,octa-cis-undecaprenyl phosphate + phosphate + H(+). Its function is as follows. Catalyzes the dephosphorylation of undecaprenyl diphosphate (UPP). Confers resistance to bacitracin. This Streptomyces avermitilis (strain ATCC 31267 / DSM 46492 / JCM 5070 / NBRC 14893 / NCIMB 12804 / NRRL 8165 / MA-4680) protein is Undecaprenyl-diphosphatase 2.